We begin with the raw amino-acid sequence, 992 residues long: Probable RNA-dependent RNA polymerase 3 (992 aa).

Residues 88–113 (PRLSPGESPVQSPRTPAKKSCRASQD) form a disordered region.

The protein belongs to the RdRP family.

The catalysed reaction is RNA(n) + a ribonucleoside 5'-triphosphate = RNA(n+1) + diphosphate. Probably involved in the RNA silencing pathway and required for the generation of small interfering RNAs (siRNAs). In Arabidopsis thaliana (Mouse-ear cress), this protein is Probable RNA-dependent RNA polymerase 3 (RDR3).